A 403-amino-acid polypeptide reads, in one-letter code: Tyrosine--tRNA ligase (403 aa).

The 'HIGH' region signature appears at 45–54 (PTAPDLHLGH). The short motif at 229 to 233 (KMSKS) is the 'KMSKS' region element. Lysine 232 contacts ATP. One can recognise an S4 RNA-binding domain in the interval 341–402 (VLLGRLLAEA…GKRRFARIVF (62 aa)).

Belongs to the class-I aminoacyl-tRNA synthetase family. TyrS type 2 subfamily. In terms of assembly, homodimer.

The protein resides in the cytoplasm. It carries out the reaction tRNA(Tyr) + L-tyrosine + ATP = L-tyrosyl-tRNA(Tyr) + AMP + diphosphate + H(+). Its function is as follows. Catalyzes the attachment of tyrosine to tRNA(Tyr) in a two-step reaction: tyrosine is first activated by ATP to form Tyr-AMP and then transferred to the acceptor end of tRNA(Tyr). This is Tyrosine--tRNA ligase from Geobacter metallireducens (strain ATCC 53774 / DSM 7210 / GS-15).